The primary structure comprises 648 residues: Probable potassium transport system protein Kup 1 (648 aa).

The disordered stretch occupies residues 1-31 (MSDAVTDADGSSAQSHAQSAGHHAVQGHGGH). The span at 10–26 (GSSAQSHAQSAGHHAVQ) shows a compositional bias: low complexity. The next 12 helical transmembrane spans lie at 39–59 (LAVG…LYAL), 73–93 (LLHI…IVTF), 130–150 (IILL…ITPA), 165–185 (PDMH…LFFI), 193–213 (VAAF…VLGA), 243–263 (FLAM…YADM), 275–295 (WLVF…SLLI), 317–337 (LLFI…SGAF), 364–384 (IFIP…VLVF), 394–414 (YGIA…VVLF), 421–441 (APAA…YLGA), and 446–466 (IPDG…LLTT).

It belongs to the HAK/KUP transporter (TC 2.A.72) family.

Its subcellular location is the cell inner membrane. It catalyses the reaction K(+)(in) + H(+)(in) = K(+)(out) + H(+)(out). In terms of biological role, transport of potassium into the cell. Likely operates as a K(+):H(+) symporter. This Novosphingobium aromaticivorans (strain ATCC 700278 / DSM 12444 / CCUG 56034 / CIP 105152 / NBRC 16084 / F199) protein is Probable potassium transport system protein Kup 1.